The following is a 196-amino-acid chain: Probable GTP-binding protein EngB (196 aa).

The EngB-type G domain maps to 22–195 (KLPEVALAGR…WNWIESITKV (174 aa)). Residues 30 to 37 (GRSNVGKS), 57 to 61 (GKTQT), 75 to 78 (DVPG), 142 to 145 (TKID), and 174 to 176 (FSA) contribute to the GTP site. Mg(2+) is bound by residues Ser37 and Thr59.

Belongs to the TRAFAC class TrmE-Era-EngA-EngB-Septin-like GTPase superfamily. EngB GTPase family. It depends on Mg(2+) as a cofactor.

Its function is as follows. Necessary for normal cell division and for the maintenance of normal septation. The polypeptide is Probable GTP-binding protein EngB (Ligilactobacillus salivarius (strain UCC118) (Lactobacillus salivarius)).